The primary structure comprises 593 residues: MLILNGFSSATLALITPPFLPKGGKALSQSGPDGLASITLPLPISAERGFAPALALHYSSGGGNGPFGVGWSCATMSIARRTSHGVPQYNDSDEFLGPDGEVLVQTLSTGDAPNPVTCFAYGDVSFPQSYTVTRYQPRTESSFYRLEYWVGNSNGDDFWLLHDSNGILHLLGKTAAARLSDPQAASHTAQWLVEESVTPAGEHIYYSYLAENGDNVDLNGNEAGRDRSAMRYLSKVQYGNATPAADLYLWTSATPAVQWLFTLVFDYGERGVDPQVPPAFTAQNSWLARQDPFSLYNYGFEIRLHRLCRQVLMFHHFPDELGEADTLVSRLLLEYDENPILTQLCAARTLAYEGDGYRRAPVNNMMPPPPPPPPPMMGGNSSRPKSKWAIVEESKQIQALRYYSAQGYSVINKYLRGDDYPETQAKETLLSRDYLSTNEPSDEEFKNAMSVYINDIAEGLSSLPETDHRVVYRGLKLDKPALSDVLKEYTTIGNIIIDKAFMSTSPDKAWINDTILNIYLEKGHKGRILGDVAHFKGEAEMLFPPNTKLKIESIVNCGSQDFASQLSKLRLSDDATADTNRIKRIINMRVLNS.

The segment at 361-384 (PVNNMMPPPPPPPPPMMGGNSSRP) is disordered. The span at 366 to 376 (MPPPPPPPPPM) shows a compositional bias: pro residues. A TR mART core domain is found at 375-578 (PMMGGNSSRP…LRLSDDATAD (204 aa)). Residues Arg-473, Ser-503, and Glu-540 contribute to the active site.

Belongs to the SpvB family.

It is found in the secreted. The catalysed reaction is L-arginyl-[protein] + NAD(+) = N(omega)-(ADP-D-ribosyl)-L-arginyl-[protein] + nicotinamide + H(+). Its function is as follows. Mono-ADP-ribosylates muscle and non-muscle actin. ADP-ribosylates Chinese hamster ovary and HeLa cell actin as well as rabbit muscle, porcine heart actin and non-muscle beta- and gamma-actin. ADP-ribosylation of actin prevents the polymerization of G actin to F actin, causing actin filament depolymerization, destruction of the cytoskeleton and cytotoxicity; this requires only the C-terminal 120 residues. Does not possess NAD(+)-glycohydrolase activity, unlike most mART enzymes. In Salmonella dublin, this protein is Mono(ADP-ribosyl)transferase SpvB (spvB).